We begin with the raw amino-acid sequence, 563 residues long: Inorganic phosphate transporter PT2 (563 aa).

Disordered regions lie at residues 1-51 (MAPR…SGEE) and 67-96 (DGGA…PAYS). At 1–127 (MAPRYHSAAE…NGEKQSLLVP (127 aa)) the chain is on the extracellular side. Residues 128-148 (CLAVFSSNYNFTVTSIALFLM) traverse the membrane as a helical segment. The Cytoplasmic portion of the chain corresponds to 149–168 (NQDPLYKDASDTVVGSSTVK). The chain crosses the membrane as a helical span at residues 169 to 189 (MLSYAGAIVGMCTMGYLGDLI). Residues 190 to 192 (GRR) lie on the Extracellular side of the membrane. The chain crosses the membrane as a helical span at residues 193-213 (LAMILTLALVFIGALLSSICA). Topologically, residues 214–217 (WGDG) are cytoplasmic. The helical transmembrane segment at 218 to 238 (VTVLVIMGVCRFVLGVGSGGV) threads the bilayer. Over 239–263 (YPLSAVSAAEGAGSEKSNDRSMRVS) the chain is Extracellular. The helical transmembrane segment at 264 to 284 (WAYSMNVPGIMFPYIVALVLW) threads the bilayer. Topologically, residues 285-291 (CTTHNVD) are cytoplasmic. The chain crosses the membrane as a helical span at residues 292–312 (VCFRILLGFGALPALLIWLPA). The Extracellular segment spans residues 313-342 (WRMKEDRAYVAKDFAKHLAGVFVSRSYWRQ). A helical membrane pass occupies residues 343 to 363 (LLGTGVCWLLYDVTAYGILLV). Topologically, residues 364-380 (QPEITQSIWGNSSSVTD) are cytoplasmic. A helical transmembrane segment spans residues 381 to 401 (VIWQNIILNGMGIPGCFMGIL). Topologically, residues 402–412 (VLKQMGVKWLQ) are extracellular. Residues 413–433 (FWGFVGLAVSAFLMAATVEIL) traverse the membrane as a helical segment. The Cytoplasmic portion of the chain corresponds to 434–440 (QGKAWAQ). Residues 441–461 (LVLLCIVNFFINWGASITTFI) traverse the membrane as a helical segment. Residues 462-477 (LPSLVFPPEVRSTYSG) lie on the Extracellular side of the membrane. Residues 478–498 (ISAALGKIGAVGGIYTMKAIL) form a helical membrane-spanning segment. Residues 499-504 (STGGLT) are Cytoplasmic-facing. A helical transmembrane segment spans residues 505–525 (PMMICAGVPSLAAAILTWFYV). The Extracellular segment spans residues 526–563 (DPVPNTLRSSFLQCFGSLAGSCPFIDCRKFRRGSRAFE).

The protein belongs to the major facilitator superfamily. Phosphate:H(+) symporter (TC 2.A.1.9) family.

The protein resides in the cell membrane. It catalyses the reaction phosphate(in) = phosphate(out). In terms of biological role, inorganic phosphate transporter. Activity is likely sodium-independent. Exhibits higher activity under acidic pH, implying that either the monovalent form of phosphate is the preferred substrate or the transport activity is H(+)-dependent. The protein is Inorganic phosphate transporter PT2 of Toxoplasma gondii (strain ATCC 50861 / VEG).